The sequence spans 131 residues: Glycine cleavage system H protein (131 aa).

Residues 24–106 (RVTVGISDHA…YGEGWIFVVE (83 aa)) enclose the Lipoyl-binding domain. Lys65 is modified (N6-lipoyllysine).

This sequence belongs to the GcvH family. The glycine cleavage system is composed of four proteins: P, T, L and H. (R)-lipoate is required as a cofactor.

Functionally, the glycine cleavage system catalyzes the degradation of glycine. The H protein shuttles the methylamine group of glycine from the P protein to the T protein. The chain is Glycine cleavage system H protein from Xanthomonas oryzae pv. oryzae (strain MAFF 311018).